The chain runs to 1002 residues: UPF0182 protein Mvan_1814 (1002 aa).

7 consecutive transmembrane segments (helical) span residues 16-36, 61-81, 112-132, 174-194, 209-229, 258-278, and 286-306; these read VMIA…RLVD, LLLF…AMAL, LVGI…AQNY, FAAT…FGGI, IQLI…YWLD, KLIL…AIVL, and IGVV…PLVV. A disordered region spans residues 891-958; it reads LFGPGADATA…TGPTQLSAGK (68 aa). Residues 893 to 923 are compositionally biased toward low complexity; sequence GPGADATATGPAATEPPAGQAPQPQGNNQPP. Pro residues predominate over residues 937–950; it reads PQQPEVPVAVPPTG.

This sequence belongs to the UPF0182 family.

The protein resides in the cell membrane. This chain is UPF0182 protein Mvan_1814, found in Mycolicibacterium vanbaalenii (strain DSM 7251 / JCM 13017 / BCRC 16820 / KCTC 9966 / NRRL B-24157 / PYR-1) (Mycobacterium vanbaalenii).